Reading from the N-terminus, the 121-residue chain is Chorion class A proteins Ld9 (121 aa).

It belongs to the chorion protein family.

This protein is one of many from the eggshell of the gypsy moth. The chain is Chorion class A proteins Ld9 from Lymantria dispar (Gypsy moth).